The sequence spans 716 residues: MMSIRQRREIRATEVSEDFPAQEENVKLENKLPSGCTSRRLWKILSLTIGGTIALCIGLLTSVYLATLHENDLWFSNIKEVEREISFRTECGLYYSYYKQMLQAPTLVQGFHGLIYDNKTESMKTINLLQRMNIYQEVFLSILYRVLPIQKYLEPVYFYIYTLFGLQAIYVTALYITSWLLSGTWLSGLLAAFWYVTNRIDTTRVEFTIPLRENWALPFFAIQIAAITYFLRPNLQPLSERLTLLAIFISTFLFSLTWQFNQFMMLMQALVLFTLDSLDMLPAVKATWLYGIQITSLLLVCILQFFNSMILGSLLISFNLSVFIARKLQKNLKTGSFLNRLGKLLLHLFMVLCLTLFLNNIIKKILNLKSDEHIFKFLKAKFGLGATRDFDANLYLCEEAFGLLPFNTFGRLSDTLLFYAYIFVLSITVIVAFVVAFHNLSDSTNQQSVGKMEKGTVDLKPETAYNLIHTILFGFLALSTMRMKYLWTSHMCVFASFGLCSPEIWELLLKSVHLYNPKRICIMRYSVPILILLYLCYKFWPGMMDELSELREFYDPDTVELMNWINSNTPRKAVFAGSMQLLAGVKLCTGRTLTNHPHYEDSSLRERTRAVYQIYAKRAPEEVHALLRSFGTDYVILEDSICYERRHRRGCRLRDLLDIANGHMMDGPGENDPDLKPADHPRFCEEIKRNLPPYVAYFTRVFQNKTFHVYKLSRNK.

The Cytoplasmic portion of the chain corresponds to 1 to 43 (MMSIRQRREIRATEVSEDFPAQEENVKLENKLPSGCTSRRLWK). Residues 44-64 (ILSLTIGGTIALCIGLLTSVY) traverse the membrane as a helical segment. The Lumenal segment spans residues 65–154 (LATLHENDLW…RVLPIQKYLE (90 aa)). A glycan (N-linked (GlcNAc...) asparagine) is linked at Asn-118. The chain crosses the membrane as a helical span at residues 155 to 182 (PVYFYIYTLFGLQAIYVTALYITSWLLS). Residues 183-184 (GT) lie on the Cytoplasmic side of the membrane. The segment at residues 185-197 (WLSGLLAAFWYVT) is an intramembrane region (name=3). Topologically, residues 198–215 (NRIDTTRVEFTIPLRENW) are cytoplasmic. The segment at residues 216–230 (ALPFFAIQIAAITYF) is an intramembrane region (name=4). Over 231-239 (LRPNLQPLS) the chain is Cytoplasmic. Residues 240–256 (ERLTLLAIFISTFLFSL) traverse the membrane as a helical segment. Residues 257 to 262 (TWQFNQ) are Lumenal-facing. The helical transmembrane segment at 263 to 279 (FMMLMQALVLFTLDSLD) threads the bilayer. The Cytoplasmic portion of the chain corresponds to 280 to 289 (MLPAVKATWL). Residues 290-306 (YGIQITSLLLVCILQFF) traverse the membrane as a helical segment. Residues 307-308 (NS) lie on the Lumenal side of the membrane. A helical transmembrane segment spans residues 309–323 (MILGSLLISFNLSVF). At 324–338 (IARKLQKNLKTGSFL) the chain is on the cytoplasmic side. Residues 339-359 (NRLGKLLLHLFMVLCLTLFLN) form a helical membrane-spanning segment. Over 360–414 (NIIKKILNLKSDEHIFKFLKAKFGLGATRDFDANLYLCEEAFGLLPFNTFGRLSD) the chain is Lumenal. The helical transmembrane segment at 415-437 (TLLFYAYIFVLSITVIVAFVVAF) threads the bilayer. At 438–465 (HNLSDSTNQQSVGKMEKGTVDLKPETAY) the chain is on the cytoplasmic side. A helical transmembrane segment spans residues 466 to 485 (NLIHTILFGFLALSTMRMKY). The Lumenal segment spans residues 486 to 487 (LW). The helical transmembrane segment at 488–499 (TSHMCVFASFGL) threads the bilayer. The Cytoplasmic portion of the chain corresponds to 500–522 (CSPEIWELLLKSVHLYNPKRICI). A helical transmembrane segment spans residues 523 to 539 (MRYSVPILILLYLCYKF). Over 540-716 (WPGMMDELSE…FHVYKLSRNK (177 aa)) the chain is Lumenal. Asn-704 carries an N-linked (GlcNAc...) asparagine glycan.

This sequence belongs to the dpy-19 family. Widely expressed.

The protein localises to the endoplasmic reticulum membrane. It carries out the reaction L-tryptophyl-[protein] + a di-trans,poly-cis-dolichyl beta-D-mannosyl phosphate = C-alpha-D-mannosyl-L-tryptophyl-[protein] + a di-trans,poly-cis-dolichyl phosphate + H(+). It functions in the pathway protein modification; protein glycosylation. C-mannosyltransferase that mediates C-mannosylation of tryptophan residues on target proteins. The reaction occurs on the luminal side of the endoplasmic reticulum and involves the transfer of a mannose unit from a dolichylphosphate mannose (Dol-P-Man) donor to an acceptor protein containing a WxxW or WxxC consensus sequence. C-mannosylates RSPO1, a Wnt signaling regulator, preferentially at the first Trp residue in the sequence WxxW. C-mannosylates the netrin receptor UNC5A, preferentially at the third tryptophan of WxxWxxWxxC sequence. In terms of biological role, has no C-mannosyltransferase activity. This chain is Protein C-mannosyl-transferase DPY19L3 (DPY19L3), found in Homo sapiens (Human).